Here is a 303-residue protein sequence, read N- to C-terminus: Hemolysin E (303 aa).

Cysteines 87 and 285 form a disulfide. The helical transmembrane segment at 183-203 (AGVVAGPFGLIISYSIAAGVV) threads the bilayer.

The protein belongs to the hemolysin E family. Monomer and oligomer. In periplasm, it is present as a monomer, while in outer membrane vesicles, it oligomerizes to form a pore structure that is active. The pore is formed by a dodecamer. In terms of processing, in periplasm, it forms a disulfide bond, which prevents the oligomerization. In outer membrane vesicles, the redox status prevents formation of the disulfide bond, leading to oligomerization and pore formation.

The protein localises to the secreted. It is found in the periplasm. Its subcellular location is the host cell membrane. Toxin, which has some hemolytic activity towards mammalian cells. Acts by forming a pore-like structure upon contact with mammalian cells. This is Hemolysin E (hlyE) from Escherichia coli O157:H7.